The sequence spans 322 residues: Ribonuclease Z (322 aa).

Residues His62, His64, Asp66, His67, His139, Asp210, and His268 each contribute to the Zn(2+) site. Asp66 serves as the catalytic Proton acceptor.

This sequence belongs to the RNase Z family. Homodimer. The cofactor is Zn(2+).

It catalyses the reaction Endonucleolytic cleavage of RNA, removing extra 3' nucleotides from tRNA precursor, generating 3' termini of tRNAs. A 3'-hydroxy group is left at the tRNA terminus and a 5'-phosphoryl group is left at the trailer molecule.. In terms of biological role, zinc phosphodiesterase, which displays some tRNA 3'-processing endonuclease activity. Probably involved in tRNA maturation, by removing a 3'-trailer from precursor tRNA. The chain is Ribonuclease Z from Nostoc sp. (strain PCC 7120 / SAG 25.82 / UTEX 2576).